We begin with the raw amino-acid sequence, 332 residues long: Glycerol-3-phosphate dehydrogenase [NAD(P)+] (332 aa).

Residues Trp-11, Arg-30, and Lys-108 each contribute to the NADPH site. 3 residues coordinate sn-glycerol 3-phosphate: Lys-108, Gly-137, and Ser-139. Ala-141 is an NADPH binding site. Residues Lys-192, Asp-245, Ser-255, Arg-256, and Asn-257 each contribute to the sn-glycerol 3-phosphate site. Catalysis depends on Lys-192, which acts as the Proton acceptor. Arg-256 serves as a coordination point for NADPH. The NADPH site is built by Val-280 and Glu-282.

The protein belongs to the NAD-dependent glycerol-3-phosphate dehydrogenase family.

The protein resides in the cytoplasm. It carries out the reaction sn-glycerol 3-phosphate + NAD(+) = dihydroxyacetone phosphate + NADH + H(+). The catalysed reaction is sn-glycerol 3-phosphate + NADP(+) = dihydroxyacetone phosphate + NADPH + H(+). The protein operates within membrane lipid metabolism; glycerophospholipid metabolism. In terms of biological role, catalyzes the reduction of the glycolytic intermediate dihydroxyacetone phosphate (DHAP) to sn-glycerol 3-phosphate (G3P), the key precursor for phospholipid synthesis. The chain is Glycerol-3-phosphate dehydrogenase [NAD(P)+] from Burkholderia multivorans (strain ATCC 17616 / 249).